The primary structure comprises 122 residues: Large ribosomal subunit protein bL12 (122 aa).

It belongs to the bacterial ribosomal protein bL12 family. In terms of assembly, homodimer. Part of the ribosomal stalk of the 50S ribosomal subunit. Forms a multimeric L10(L12)X complex, where L10 forms an elongated spine to which 2 to 4 L12 dimers bind in a sequential fashion. Binds GTP-bound translation factors.

In terms of biological role, forms part of the ribosomal stalk which helps the ribosome interact with GTP-bound translation factors. Is thus essential for accurate translation. The protein is Large ribosomal subunit protein bL12 of Staphylococcus saprophyticus subsp. saprophyticus (strain ATCC 15305 / DSM 20229 / NCIMB 8711 / NCTC 7292 / S-41).